Here is a 367-residue protein sequence, read N- to C-terminus: GTP cyclohydrolase FolE2 (367 aa).

It belongs to the GTP cyclohydrolase IV family.

It carries out the reaction GTP + H2O = 7,8-dihydroneopterin 3'-triphosphate + formate + H(+). The protein operates within cofactor biosynthesis; 7,8-dihydroneopterin triphosphate biosynthesis; 7,8-dihydroneopterin triphosphate from GTP: step 1/1. Its function is as follows. Converts GTP to 7,8-dihydroneopterin triphosphate. The chain is GTP cyclohydrolase FolE2 from Dinoroseobacter shibae (strain DSM 16493 / NCIMB 14021 / DFL 12).